The chain runs to 657 residues: Glycogen debranching enzyme (657 aa).

The active-site Nucleophile is the Asp336. The Proton donor role is filled by Glu371. Positions 458–467 (NEANGEENRD) are enriched in basic and acidic residues. The tract at residues 458–479 (NEANGEENRDGTNNNYSNNHGK) is disordered.

The protein belongs to the glycosyl hydrolase 13 family.

It carries out the reaction Hydrolysis of (1-&gt;6)-alpha-D-glucosidic linkages to branches with degrees of polymerization of three or four glucose residues in limit dextrin.. It participates in glycan degradation; glycogen degradation. Removes maltotriose and maltotetraose chains that are attached by 1,6-alpha-linkage to the limit dextrin main chain, generating a debranched limit dextrin. This is Glycogen debranching enzyme from Shigella boydii serotype 18 (strain CDC 3083-94 / BS512).